The chain runs to 176 residues: Tumor necrosis factor receptor superfamily member 23 (176 aa).

Residues 1–29 (MVTFSHVSSLSHWFLLLLLLNLFLPVIFA) form the signal peptide. TNFR-Cys repeat units lie at residues 37 to 72 (NCPDGEYQSNDVCCKTCPSGTFVKAPCKIPHTQGQC), 74 to 114 (KCHP…DRKC), and 115 to 155 (ECQI…NTVC). 9 disulfide bridges follow: C38/C49, C50/C63, C53/C72, C75/C90, C93/C106, C96/C114, C116/C131, C134/C147, and C137/C155. N-linked (GlcNAc...) asparagine glycosylation occurs at N148. C155 carries the GPI-anchor amidated cysteine lipid modification. Residues 156-176 (SSSVSNPRNWLFLLMLIVFCI) constitute a propeptide, removed in mature form.

In terms of tissue distribution, ubiquitous.

The protein resides in the cell membrane. In terms of biological role, receptor for the cytotoxic ligand TRAIL. Lacks a cytoplasmic death domain and hence is not capable of inducing apoptosis. May protect cells against TRAIL mediated apoptosis through ligand competition. Cannot induce the NF-kappa-B pathway. This Mus musculus (Mouse) protein is Tumor necrosis factor receptor superfamily member 23 (Tnfrsf23).